Reading from the N-terminus, the 287-residue chain is Nucleoid occlusion protein (287 aa).

A DNA-binding region (H-T-H motif) is located at residues 146–165; that stretch reads EALAQRVGKSQSAIANKMRL.

This sequence belongs to the ParB family.

It localises to the cytoplasm. The protein localises to the nucleoid. Functionally, effects nucleoid occlusion by binding relatively nonspecifically to DNA and preventing the assembly of the division machinery in the vicinity of the nucleoid, especially under conditions that disturb the cell cycle. It helps to coordinate cell division and chromosome segregation by preventing the formation of the Z ring through the nucleoid, which would cause chromosome breakage. This is Nucleoid occlusion protein from Listeria monocytogenes serotype 4a (strain HCC23).